Consider the following 575-residue polypeptide: Amyloid-beta A4 precursor protein-binding family A member 3 (575 aa).

N-acetylmethionine is present on M1. The segment covering 1-10 has biased composition (polar residues); sequence MDFPTISRSP. 2 disordered regions span residues 1 to 50 and 118 to 211; these read MDFP…LSRM and CEEC…GPCD. At S11 the chain carries Phosphoserine. The segment covering 143–153 has biased composition (acidic residues); the sequence is EDPDEDSDSPE. Residues 156-184 show a composition bias toward low complexity; it reads EGASAEQEGSRSSSSSPEPWLETVPLVTP. Phosphoserine is present on S171. A required for interaction with NECAB3 region spans residues 215–364; that stretch reads LLDGVIFGAR…QFLRESGIDP (150 aa). Residues 217 to 381 enclose the PID domain; sequence DGVIFGARYL…SPGACHLHNG (165 aa). The residue at position 372 (S372) is a Phosphoserine. PDZ domains are found at residues 394-480 and 485-560; these read EVHL…IVHC and TAII…TMPA.

As to quaternary structure, binds to the cytoplasmic domain of amyloid protein (APP) in vivo. Interacts with HIF1AN (via N-terminus). Interacts with NECAB3; seems to mediate the interaction between NECAB3 and HIF1AN. In terms of tissue distribution, expressed in all tissues examined with lower levels in brain and testis.

The protein localises to the cytoplasm. It localises to the perinuclear region. Functionally, may modulate processing of the amyloid-beta precursor protein (APP) and hence formation of APP-beta. May enhance the activity of HIF1A in macrophages by inhibiting the activity of HIF1AN. The chain is Amyloid-beta A4 precursor protein-binding family A member 3 (APBA3) from Homo sapiens (Human).